The sequence spans 100 residues: Succinate dehydrogenase assembly factor 4, mitochondrial (100 aa).

The N-terminal 31 residues, 1–31 (MFNRNLRAVILKNYNKALTRCLHDAGNLKRP), are a transit peptide targeting the mitochondrion. The interval 24–100 (DAGNLKRPTP…YSYEGRVTDF (77 aa)) is disordered. Composition is skewed to basic and acidic residues over residues 36–68 (LPKE…KDFE) and 85–100 (PTVH…VTDF).

Belongs to the SDHAF4 family. Interacts with sdh1 in its FAD-bound form.

It is found in the mitochondrion matrix. Its function is as follows. Plays an essential role in the assembly of succinate dehydrogenase (SDH), an enzyme complex (also referred to as respiratory complex II) that is a component of both the tricarboxylic acid (TCA) cycle and the mitochondrial electron transport chain, and which couples the oxidation of succinate to fumarate with the reduction of ubiquinone (coenzyme Q) to ubiquinol. Binds to the flavoprotein subunit sdh1 in its FAD-bound form, blocking the generation of excess reactive oxygen species (ROS) and facilitating its assembly with the iron-sulfur protein subunit sdh2 into the SDH catalytic dimer. This is Succinate dehydrogenase assembly factor 4, mitochondrial from Schizosaccharomyces pombe (strain 972 / ATCC 24843) (Fission yeast).